The chain runs to 70 residues: Large ribosomal subunit protein bL31 (70 aa).

C16, C18, C37, and C40 together coordinate Zn(2+).

The protein belongs to the bacterial ribosomal protein bL31 family. Type A subfamily. Part of the 50S ribosomal subunit. Requires Zn(2+) as cofactor.

Binds the 23S rRNA. In Colwellia psychrerythraea (strain 34H / ATCC BAA-681) (Vibrio psychroerythus), this protein is Large ribosomal subunit protein bL31.